The chain runs to 815 residues: Ent-sandaracopimara-8(14),15-diene synthase, chloroplastic (815 aa).

A chloroplast-targeting transit peptide spans 1–38 (MLPSSICSMGQIPRTSPHYYGMLPKQMSKGHPPMVTRA). Residues aspartate 550, aspartate 554, asparagine 696, threonine 700, and glutamate 704 each coordinate Mg(2+). Residues 550 to 554 (DDFFD) carry the DDXXD motif motif.

It belongs to the terpene synthase family. Mg(2+) serves as cofactor.

The protein localises to the plastid. The protein resides in the chloroplast. It carries out the reaction ent-copalyl diphosphate = ent-sandaracopimara-8(14),15-diene + diphosphate. It catalyses the reaction 9alpha-copalyl diphosphate = (12E)-9alpha-labda-8(17),12,14-triene + diphosphate. Functionally, involved in the biosynthesis of oryzalexin A-F phytoalexins. Catalyzes the conversion of ent-copalyl diphosphate to the phytoalexin precursor ent-sandaracopimaradiene. The polypeptide is Ent-sandaracopimara-8(14),15-diene synthase, chloroplastic (Oryza sativa subsp. japonica (Rice)).